A 296-amino-acid chain; its full sequence is Magnetosome protein MamB (296 aa).

The Cytoplasmic segment spans residues 1–12; the sequence is MKFENCRDCREE. A transmembrane domain (TMD) region spans residues 1-214; the sequence is MKFENCRDCR…GLMDSSVDTE (214 aa). Residues 13–33 form a helical membrane-spanning segment; it reads VVWWAFTADICMTLFKGVLGL. At 34–83 the chain is on the lumenal side; it reads MSGSVALVADSLHSGADVVASGVTQLSLKISNKPADERYPFGYGNIQYIS. A helical membrane pass occupies residues 84-104; the sequence is SSIVGSLLLIGASFLMYGSVM. Residues 105–112 are Cytoplasmic-facing; the sequence is KLISGTYE. Residues 113–133 traverse the membrane as a helical segment; the sequence is APSIFAAVGASVTVIVNELMY. Residues 134 to 164 lie on the Lumenal side of the membrane; the sequence is RYQICVGNENNSPAIIANAWDNRSDAISSAA. The chain crosses the membrane as a helical span at residues 165–185; it reads VMVGVIASVIGFPIADTIAAI. Residues 186–296 lie on the Cytoplasmic side of the membrane; the sequence is GVSALVGRIG…SPAPAAAARA (111 aa). Residues 215-296 are C-terminal domain (CTD); the sequence is LLQTAWQVAM…SPAPAAAARA (82 aa).

This sequence belongs to the cation diffusion facilitator (CDF) transporter (TC 2.A.4) family. As to quaternary structure, forms heterodimers with MamM. Probably interacts with MamE.

It localises to the magnetosome membrane. Functionally, plays a dual, essential role in magnetosome formation; required for magnetosome vesicle formation as well as biomineralization. Probably binds and transports iron. Requires heterodimerization with MamM for stability. This is Magnetosome protein MamB (mamB) from Paramagnetospirillum magneticum (strain ATCC 700264 / AMB-1) (Magnetospirillum magneticum).